Consider the following 308-residue polypeptide: Mitochondrial import receptor subunit TOM40B (308 aa).

The tract at residues 281–308 (PLPVTLALGAFLNHWRNRFHCGFSITVG) is required for mitochondrial targeting.

This sequence belongs to the Tom40 family. As to quaternary structure, forms part of the preprotein translocase of the outer mitochondrial membrane (TOM complex) containing TOMM22, TOMM40, TOMM40L and TOMM70. Interacts with mitochondrial targeting sequences. As to expression, widely expressed. Higher levels in heart, brain and liver, very low level in testis.

It localises to the mitochondrion outer membrane. Potential channel-forming protein implicated in import of protein precursors into mitochondria. The sequence is that of Mitochondrial import receptor subunit TOM40B from Rattus norvegicus (Rat).